A 308-amino-acid polypeptide reads, in one-letter code: Isoflavone reductase-like protein (308 aa).

NADP(+) is bound by residues 11 to 17 (GGTGYIG), Arg36, and Lys45. Catalysis depends on Lys133, which acts as the Proton acceptor. Arg137 provides a ligand contact to NADP(+).

The protein belongs to the NmrA-type oxidoreductase family. Isoflavone reductase subfamily. As to quaternary structure, homodimer.

The protein resides in the cytoplasm. The polypeptide is Isoflavone reductase-like protein (Olea europaea (Common olive)).